Reading from the N-terminus, the 241-residue chain is Phycocyanobilin:ferredoxin oxidoreductase (241 aa).

It belongs to the HY2 family.

It carries out the reaction (2R,3Z)-phycocyanobilin + 4 oxidized [2Fe-2S]-[ferredoxin] = biliverdin IXalpha + 4 reduced [2Fe-2S]-[ferredoxin] + 4 H(+). Catalyzes the four-electron reduction of biliverdin IX-alpha (2-electron reduction at both the A and D rings); the reaction proceeds via an isolatable 2-electron intermediate, 181,182-dihydrobiliverdin. The chain is Phycocyanobilin:ferredoxin oxidoreductase from Prochlorococcus marinus (strain MIT 9312).